The chain runs to 334 residues: D-fructose 1,6-bisphosphatase class 2/sedoheptulose 1,7-bisphosphatase (334 aa).

Mn(2+)-binding residues include D33, E57, D85, and E88. Residues 88–90, Y119, 164–166, and 186–188 each bind substrate; these read EGT, RAR, and DGD. Position 213 (E213) interacts with Mn(2+).

This sequence belongs to the FBPase class 2 family. As to quaternary structure, homotetramer. Requires Mn(2+) as cofactor.

It carries out the reaction beta-D-fructose 1,6-bisphosphate + H2O = beta-D-fructose 6-phosphate + phosphate. The enzyme catalyses D-sedoheptulose 1,7-bisphosphate + H2O = D-sedoheptulose 7-phosphate + phosphate. It functions in the pathway carbohydrate biosynthesis; Calvin cycle. In terms of biological role, catalyzes the hydrolysis of fructose 1,6-bisphosphate (Fru 1,6-P2) and sedoheptulose 1,7-bisphosphate (Sed 1,7-P2) to fructose 6-phosphate and sedoheptulose 7-phosphate, respectively. This Prochlorococcus marinus (strain MIT 9303) protein is D-fructose 1,6-bisphosphatase class 2/sedoheptulose 1,7-bisphosphatase.